The chain runs to 130 residues: Early E3B 14.5 kDa protein (130 aa).

The N-terminal stretch at 1-19 (MKRIVTFVLLIFCALPVLC) is a signal peptide. A helical membrane pass occupies residues 53-77 (AWLYAIISVMVFCSTIFALAIYPYL).

Belongs to the adenoviridae E3_14 family. Post-translationally, phosphorylated on serine; O-glycosylated, but not N-glycosylated.

It is found in the host membrane. Functionally, down-regulates the EGF receptor and prevents cytolysis by TNF. The sequence is that of Early E3B 14.5 kDa protein from Human adenovirus C serotype 6 (HAdV-6).